We begin with the raw amino-acid sequence, 435 residues long: F-box/FBD/LRR-repeat protein At1g51370 (435 aa).

The F-box domain maps to 18–64 (EDRISQLPEPLISEILFHLSTKDSVRTSALSTKWRYLWQSVPGLDLD). LRR repeat units lie at residues 123–148 (VHCF…RLRW), 170–195 (VSYP…ILFS), 234–259 (AKMY…DFVN), 262–287 (GRYQ…VISS), and 314–340 (RFYI…ILEM). The FBD domain maps to 354–406 (EPNVMVSTVPWCLVSSLKFVELKRSIPRYEGEMELVRYVLTNSTVLKKLRLNV).

The sequence is that of F-box/FBD/LRR-repeat protein At1g51370 from Arabidopsis thaliana (Mouse-ear cress).